We begin with the raw amino-acid sequence, 399 residues long: Beta-1,6-galactosyltransferase GALT31A (399 aa).

Topologically, residues 1–12 (MGMGRYQKSATS) are cytoplasmic. A helical; Signal-anchor for type II membrane protein transmembrane segment spans residues 13–35 (GVSARWVFVLCISSFLLGVLVVN). The Lumenal portion of the chain corresponds to 36-399 (RLLASFETVD…GDGAIWHSSF (364 aa)).

The protein belongs to the glycosyltransferase 31 family. Interacts with GALT29A. Mn(2+) serves as cofactor.

The protein localises to the golgi apparatus membrane. It participates in protein modification; protein glycosylation. Its function is as follows. Beta-galactosyltransferase involved in elongation of beta-1,6-linked galactan side chains on arabinogalactan proteins. Required for the progression of embryogenesis beyond the globular stage. Beta-galactosyltransferase involved in the biosynthesis of type II arabinogalactan. Transfers galactose from UDP-galactose to a mixture of various oligosaccharides derived from arabinogalactan proteins. Forms a complex with GALT29A that can work cooperatively to enhance the activities of adding galactose residues at O6 positions to beta-1,6-linked galactan and beta-1,3-linked galactan. The protein is Beta-1,6-galactosyltransferase GALT31A of Arabidopsis thaliana (Mouse-ear cress).